The chain runs to 233 residues: Thymidylate kinase (233 aa).

10 to 17 (GVDGVGKT) lines the ATP pocket.

It belongs to the thymidylate kinase family.

It carries out the reaction dTMP + ATP = dTDP + ADP. Phosphorylation of dTMP to form dTDP in both de novo and salvage pathways of dTTP synthesis. This is Thymidylate kinase from Bifidobacterium longum subsp. infantis (strain ATCC 15697 / DSM 20088 / JCM 1222 / NCTC 11817 / S12).